The chain runs to 190 residues: Elongation factor P 2 (190 aa).

The protein belongs to the elongation factor P family.

Its subcellular location is the cytoplasm. Its pathway is protein biosynthesis; polypeptide chain elongation. Its function is as follows. Involved in peptide bond synthesis. Stimulates efficient translation and peptide-bond synthesis on native or reconstituted 70S ribosomes in vitro. Probably functions indirectly by altering the affinity of the ribosome for aminoacyl-tRNA, thus increasing their reactivity as acceptors for peptidyl transferase. The polypeptide is Elongation factor P 2 (efp2) (Chlamydia pneumoniae (Chlamydophila pneumoniae)).